The sequence spans 620 residues: Chaperone protein HscA homolog (620 aa).

This sequence belongs to the heat shock protein 70 family.

Chaperone involved in the maturation of iron-sulfur cluster-containing proteins. Has a low intrinsic ATPase activity which is markedly stimulated by HscB. The chain is Chaperone protein HscA homolog from Neisseria meningitidis serogroup B (strain ATCC BAA-335 / MC58).